A 507-amino-acid chain; its full sequence is ATP synthase subunit alpha, chloroplastic (507 aa).

170 to 177 (GDRQTGKT) contacts ATP. The residue at position 383 (Ser383) is a Phosphoserine.

The protein belongs to the ATPase alpha/beta chains family. F-type ATPases have 2 components, CF(1) - the catalytic core - and CF(0) - the membrane proton channel. CF(1) has five subunits: alpha(3), beta(3), gamma(1), delta(1), epsilon(1). CF(0) has four main subunits: a, b, b' and c. Only phosphorylated in mesophyll cells, and only when cells are grown under high rather than low light regimes (70 vs 900 umol photons/m-2/s).

The protein resides in the plastid. The protein localises to the chloroplast thylakoid membrane. It catalyses the reaction ATP + H2O + 4 H(+)(in) = ADP + phosphate + 5 H(+)(out). Functionally, produces ATP from ADP in the presence of a proton gradient across the membrane. The alpha chain is a regulatory subunit. This Zea mays (Maize) protein is ATP synthase subunit alpha, chloroplastic.